The primary structure comprises 489 residues: Ammonium transporter MEP3 (489 aa).

Residues 1–17 (MARGDGHLWTETYDSST) lie on the Extracellular side of the membrane. A helical transmembrane segment spans residues 18-38 (VAFMILGAALVFFMVPGLGFL). Residues 39 to 48 (YSGLARRKSA) lie on the Cytoplasmic side of the membrane. A helical membrane pass occupies residues 49–69 (LALIWVVIMATLVGILQWYFW). Residues 70–108 (GYSLAFSKTATNNKFIGNLDSFGFRNVYGKISDDSTYPE) are Extracellular-facing. Residues 109–129 (LIYAIFQMMFMCVALSIIAGA) traverse the membrane as a helical segment. Residues 130–139 (TAERGKLFPH) are Cytoplasmic-facing. The chain crosses the membrane as a helical span at residues 140 to 160 (MVFLFVFATLVYCPITYWIWA). Residues 161–173 (PGGWAYQWGVLDW) lie on the Extracellular side of the membrane. A helical transmembrane segment spans residues 174-194 (AGGGNIEILSAVAGFVYSYFL). The Cytoplasmic portion of the chain corresponds to 195 to 209 (GRRKENLLINFRPHN). The helical transmembrane segment at 210–230 (VSMVTLGTSILWFGWLLFNAA) threads the bilayer. The Extracellular portion of the chain corresponds to 231–239 (SSLSPNMRS). The chain crosses the membrane as a helical span at residues 240-260 (VYAFMNTCLSATTGGMTWCLL). The Cytoplasmic portion of the chain corresponds to 261 to 267 (DYRSEKK). The helical transmembrane segment at 268–288 (WSTVGLCSGIICGLVAATPSS) threads the bilayer. Position 289 (Gly-289) is a topological domain, extracellular. The helical transmembrane segment at 290–310 (CITLYGSLIQGIIAGVVCNFA) threads the bilayer. At 311 to 330 (TKIKYYLKVDDSLDLLAEHG) the chain is on the cytoplasmic side. A helical membrane pass occupies residues 331–351 (IAGVVGLIFNALFAADWVIGM). The Extracellular segment spans residues 352 to 372 (DGTTKHKGGWLTHNWKQMYIQ). A helical membrane pass occupies residues 373–393 (IAYIGASAGYCAVVTAIICFV). Residues 394 to 489 (LGKIPGVHLR…NPKLHHAKEA (96 aa)) are Cytoplasmic-facing. Polar residues predominate over residues 448–481 (GANSASETNPTEDSQNSSLSSATVSGQNEKSNNP). The tract at residues 448 to 489 (GANSASETNPTEDSQNSSLSSATVSGQNEKSNNPKLHHAKEA) is disordered.

This sequence belongs to the ammonia transporter channel (TC 1.A.11.2) family.

It localises to the membrane. Its function is as follows. Transporter for ammonium (both charged and uncharged NH3 and NH4) to use as a nitrogen source. The affinity of MEP2 is about twenty times higher than that of MEP1. MEP3 has the lowest affinity. The protein is Ammonium transporter MEP3 (MEP3) of Saccharomyces cerevisiae (strain ATCC 204508 / S288c) (Baker's yeast).